A 723-amino-acid polypeptide reads, in one-letter code: Probable cadmium-transporting ATPase (723 aa).

One can recognise an HMA domain in the interval 12–75; the sequence is EMKAYRVQGF…AGAFENLKVT (64 aa). Cd(2+) is bound by residues cysteine 23 and cysteine 26. 5 helical membrane-spanning segments follow: residues 103-123, 127-147, 168-188, 329-349, and 361-381; these read STLL…YVNG, IVTT…LFKV, IGGA…LFAI, YYTP…PLFF, and LAVL…ISIV. Catalysis depends on aspartate 412, which acts as the 4-aspartylphosphate intermediate. The next 2 helical transmembrane spans lie at 671 to 690 and 694 to 716; these read IIKA…LLLV and WLTL…LNGL.

It belongs to the cation transport ATPase (P-type) (TC 3.A.3) family. Type IB subfamily.

Its subcellular location is the cell membrane. It catalyses the reaction Cd(2+)(in) + ATP + H2O = Cd(2+)(out) + ADP + phosphate + H(+). In terms of biological role, couples the hydrolysis of ATP with the export of cadmium. The protein is Probable cadmium-transporting ATPase (cadA) of Alkalihalophilus pseudofirmus (strain ATCC BAA-2126 / JCM 17055 / OF4) (Bacillus pseudofirmus).